We begin with the raw amino-acid sequence, 622 residues long: Chaperone protein HscA homolog (622 aa).

This sequence belongs to the heat shock protein 70 family.

Its function is as follows. Chaperone involved in the maturation of iron-sulfur cluster-containing proteins. Has a low intrinsic ATPase activity which is markedly stimulated by HscB. The chain is Chaperone protein HscA homolog from Delftia acidovorans (strain DSM 14801 / SPH-1).